A 155-amino-acid chain; its full sequence is Deoxyuridine 5'-triphosphate nucleotidohydrolase (155 aa).

Substrate contacts are provided by residues 74–76, N87, and 91–93; these read RSG and TID.

It belongs to the dUTPase family. It depends on Mg(2+) as a cofactor.

The catalysed reaction is dUTP + H2O = dUMP + diphosphate + H(+). It participates in pyrimidine metabolism; dUMP biosynthesis; dUMP from dCTP (dUTP route): step 2/2. Functionally, this enzyme is involved in nucleotide metabolism: it produces dUMP, the immediate precursor of thymidine nucleotides and it decreases the intracellular concentration of dUTP so that uracil cannot be incorporated into DNA. The chain is Deoxyuridine 5'-triphosphate nucleotidohydrolase from Cereibacter sphaeroides (strain ATCC 17023 / DSM 158 / JCM 6121 / CCUG 31486 / LMG 2827 / NBRC 12203 / NCIMB 8253 / ATH 2.4.1.) (Rhodobacter sphaeroides).